Reading from the N-terminus, the 513-residue chain is GMP synthase [glutamine-hydrolyzing] (513 aa).

One can recognise a Glutamine amidotransferase type-1 domain in the interval 5-195 (LVLVIDFGGQ…VYNICGCTGD (191 aa)). Cysteine 82 serves as the catalytic Nucleophile. Residues histidine 169 and glutamate 171 contribute to the active site. A GMPS ATP-PPase domain is found at 196–388 (WKMDSFVEKT…LGIPEKLVFR (193 aa)). 223–229 (SGGVDSS) contacts ATP.

As to quaternary structure, homodimer.

It catalyses the reaction XMP + L-glutamine + ATP + H2O = GMP + L-glutamate + AMP + diphosphate + 2 H(+). Its pathway is purine metabolism; GMP biosynthesis; GMP from XMP (L-Gln route): step 1/1. Its function is as follows. Catalyzes the synthesis of GMP from XMP. The chain is GMP synthase [glutamine-hydrolyzing] from Clostridium botulinum (strain Eklund 17B / Type B).